The sequence spans 154 residues: MGLSDGEWQLVLNVWGKVEGDIGGHGQEVLIRLFKGHPETLEKFDKFKHLKAEDEMRASEDLKKHGTTVLTALGGILKKKGQHAAELAPLAQSHATKHKIPVKYLEFISEAIIQVLQSKHPADFGADTQGAMSKALELFRNDIAAKYKELGFQG.

The Globin domain occupies 2-148 (GLSDGEWQLV…FRNDIAAKYK (147 aa)). Position 4 is a phosphoserine (Ser4). A nitrite-binding site is contributed by His65. His65 provides a ligand contact to O2. Thr68 bears the Phosphothreonine mark. His94 contributes to the heme b binding site.

In terms of assembly, monomer.

The protein resides in the cytoplasm. It localises to the sarcoplasm. It carries out the reaction Fe(III)-heme b-[protein] + nitric oxide + H2O = Fe(II)-heme b-[protein] + nitrite + 2 H(+). It catalyses the reaction H2O2 + AH2 = A + 2 H2O. Functionally, monomeric heme protein which primary function is to store oxygen and facilitate its diffusion within muscle tissues. Reversibly binds oxygen through a pentacoordinated heme iron and enables its timely and efficient release as needed during periods of heightened demand. Depending on the oxidative conditions of tissues and cells, and in addition to its ability to bind oxygen, it also has a nitrite reductase activity whereby it regulates the production of bioactive nitric oxide. Under stress conditions, like hypoxia and anoxia, it also protects cells against reactive oxygen species thanks to its pseudoperoxidase activity. This is Myoglobin from Hystrix cristata (North African crested porcupine).